The chain runs to 600 residues: UvrABC system protein C (600 aa).

Residues 15-92 (EKPGCYLMKD…IKKYQPYYNV (78 aa)) enclose the GIY-YIG domain. The 36-residue stretch at 197-232 (GAVKQDLTQKMEQASEQLEFERAAEIRDQLKYIEET) folds into the UVR domain.

It belongs to the UvrC family. In terms of assembly, interacts with UvrB in an incision complex.

The protein localises to the cytoplasm. The UvrABC repair system catalyzes the recognition and processing of DNA lesions. UvrC both incises the 5' and 3' sides of the lesion. The N-terminal half is responsible for the 3' incision and the C-terminal half is responsible for the 5' incision. This Lactobacillus helveticus (strain DPC 4571) protein is UvrABC system protein C.